We begin with the raw amino-acid sequence, 269 residues long: MSLEVNWEQIASSEAIREQLVDWLNDQLKAVEVPKYLADIHVTSLSLGSKAPEITIRDIGKPFDDFYDIEEERAGTGEGDEDDGRVAPTSTPMKHQTSGSSDQTDASNPISPSTSHDHENDMQFVTEIKYDSDICVEVAAQLLMNYPAEKFISLPVRLKLSDLLIHTLAVVAYVNHRVFISLLCDISENEDTDNTESHSGNLRALSSKTASRIDVVKRLKVESELGSYEPDNGSILRSVGKIETFLVDTIRNLLVQEVGWPNWIEFQGV.

Positions 1-269 (MSLEVNWEQI…WPNWIEFQGV (269 aa)) constitute an SMP-LTD domain. Positions 72–119 (ERAGTGEGDEDDGRVAPTSTPMKHQTSGSSDQTDASNPISPSTSHDHE) are disordered. Positions 88 to 114 (PTSTPMKHQTSGSSDQTDASNPISPST) are enriched in polar residues.

The protein belongs to the MDM12 family. In terms of assembly, component of the ER-mitochondria encounter structure (ERMES) or MDM complex, composed of MMM1, MDM10, MDM12 and MDM34. An MMM1 homodimer associates with one molecule of MDM12 on each side in a pairwise head-to-tail manner, and the SMP-LTD domains of MMM1 and MDM12 generate a continuous hydrophobic tunnel for phospholipid trafficking.

The protein resides in the mitochondrion outer membrane. It is found in the endoplasmic reticulum membrane. Functionally, component of the ERMES/MDM complex, which serves as a molecular tether to connect the endoplasmic reticulum (ER) and mitochondria. Components of this complex are involved in the control of mitochondrial shape and protein biogenesis, and function in nonvesicular lipid trafficking between the ER and mitochondria. MDM12 is required for the interaction of the ER-resident membrane protein MMM1 and the outer mitochondrial membrane-resident beta-barrel protein MDM10. The MDM12-MMM1 subcomplex functions in the major beta-barrel assembly pathway that is responsible for biogenesis of all mitochondrial outer membrane beta-barrel proteins, and acts in a late step after the SAM complex. The MDM10-MDM12-MMM1 subcomplex further acts in the TOM40-specific pathway after the action of the MDM12-MMM1 complex. Essential for establishing and maintaining the structure of mitochondria and maintenance of mtDNA nucleoids. The polypeptide is Mitochondrial distribution and morphology protein 12 (Komagataella phaffii (strain GS115 / ATCC 20864) (Yeast)).